Consider the following 208-residue polypeptide: Thymidylate kinase (208 aa).

Position 11–18 (11–18 (GTEGVGKT)) interacts with ATP.

It belongs to the thymidylate kinase family.

The catalysed reaction is dTMP + ATP = dTDP + ADP. In terms of biological role, phosphorylation of dTMP to form dTDP in both de novo and salvage pathways of dTTP synthesis. The polypeptide is Thymidylate kinase (Psychrobacter sp. (strain PRwf-1)).